Consider the following 179-residue polypeptide: MILYLHGFDATSPGNHEKMRQLQFIDKDVRLVSYSTLHPKHDMQHLLNEVSRQLQQSDDSDPIIIGVGLGAYWAERIGFLNGIRSVLINPNLNPQENMVGRIDRPEEYADIAGKCVSEFRGKNQGKALVILSRKDQVNDNQSVSEQLGGFYQICWDEEQPHKFPVLASHLPQINLFKQA.

This sequence belongs to the UPF0227 family.

This is UPF0227 protein Ssed_2836 from Shewanella sediminis (strain HAW-EB3).